Here is a 329-residue protein sequence, read N- to C-terminus: 4-hydroxythreonine-4-phosphate dehydrogenase (329 aa).

Histidine 136 and threonine 137 together coordinate substrate. Positions 166, 211, and 266 each coordinate a divalent metal cation. 3 residues coordinate substrate: lysine 274, asparagine 283, and arginine 292.

It belongs to the PdxA family. Homodimer. Zn(2+) is required as a cofactor. It depends on Mg(2+) as a cofactor. Co(2+) serves as cofactor.

The protein localises to the cytoplasm. It carries out the reaction 4-(phosphooxy)-L-threonine + NAD(+) = 3-amino-2-oxopropyl phosphate + CO2 + NADH. It participates in cofactor biosynthesis; pyridoxine 5'-phosphate biosynthesis; pyridoxine 5'-phosphate from D-erythrose 4-phosphate: step 4/5. In terms of biological role, catalyzes the NAD(P)-dependent oxidation of 4-(phosphooxy)-L-threonine (HTP) into 2-amino-3-oxo-4-(phosphooxy)butyric acid which spontaneously decarboxylates to form 3-amino-2-oxopropyl phosphate (AHAP). This Shigella sonnei (strain Ss046) protein is 4-hydroxythreonine-4-phosphate dehydrogenase.